Here is a 300-residue protein sequence, read N- to C-terminus: 4-hydroxy-tetrahydrodipicolinate synthase (300 aa).

Thr-46 contributes to the pyruvate binding site. The active-site Proton donor/acceptor is Tyr-135. Lys-163 serves as the catalytic Schiff-base intermediate with substrate. Val-205 contacts pyruvate.

Belongs to the DapA family. In terms of assembly, homotetramer; dimer of dimers.

It localises to the cytoplasm. It catalyses the reaction L-aspartate 4-semialdehyde + pyruvate = (2S,4S)-4-hydroxy-2,3,4,5-tetrahydrodipicolinate + H2O + H(+). The protein operates within amino-acid biosynthesis; L-lysine biosynthesis via DAP pathway; (S)-tetrahydrodipicolinate from L-aspartate: step 3/4. In terms of biological role, catalyzes the condensation of (S)-aspartate-beta-semialdehyde [(S)-ASA] and pyruvate to 4-hydroxy-tetrahydrodipicolinate (HTPA). The polypeptide is 4-hydroxy-tetrahydrodipicolinate synthase (Koribacter versatilis (strain Ellin345)).